A 329-amino-acid chain; its full sequence is Serine dehydratase-like (329 aa).

An N-acetylmethionine modification is found at Met1. Lys48 carries the post-translational modification N6-(pyridoxal phosphate)lysine.

It belongs to the serine/threonine dehydratase family. In terms of assembly, monomer. Homodimer. Pyridoxal 5'-phosphate is required as a cofactor. In terms of tissue distribution, abundantly expressed in liver.

The catalysed reaction is L-serine = pyruvate + NH4(+). The enzyme catalyses L-threonine = 2-oxobutanoate + NH4(+). It carries out the reaction L-glutamate = D-glutamate. Catalyzes the pyridoxal-phosphate-dependent dehydrative deamination of L-threonine and L-serine to ammonia and alpha-ketobutyrate and pyruvate, respectively. Also exhibits racemase activity towards L-glutamate and D-glutamate. This is Serine dehydratase-like (Sdsl) from Mus musculus (Mouse).